Here is a 2367-residue protein sequence, read N- to C-terminus: Toxin B (2367 aa).

Residues 2-91 (SLVNRKQLEK…EILELKNSNL (90 aa)) are four-helical bundle. The GT44 domain maps to 96-469 (KNLHFIWIGG…YPEANTTITL (374 aa)). The tract at residues 96-469 (KNLHFIWIGG…YPEANTTITL (374 aa)) is glucosyltransferase region. UDP-alpha-D-glucose-binding positions include 101-103 (IWI), Asn139, 269-273 (SDILR), and 286-288 (DVD). Mg(2+) is bound by residues Asp286, Asp288, and Glu516. Residue 519–521 (SLW) coordinates UDP-alpha-D-glucose. Residues 545–800 (GEDDNLDFSQ…KSKNLPELST (256 aa)) are autoprocessing region. 2 residues coordinate Zn(2+): Glu546 and Asp547. Residues 568-775 (SSSTKSSERG…EESIIKDISS (208 aa)) form the Peptidase C80 domain. 1D-myo-inositol hexakisphosphate contacts are provided by Tyr578, Lys601, and Lys648. Residue His654 coordinates Zn(2+). His654 (for protease activity) is an active-site residue. The Nucleophile; for protease activity role is filled by Cys699. Residue His758 coordinates Zn(2+). 3 residues coordinate 1D-myo-inositol hexakisphosphate: Lys765, Lys776, and Lys793. Residues 801-1501 (LLQEIRNNSN…VVLIIKVYMD (701 aa)) are translocation region. Interaction with host frizzled receptors FZD1, FZD2 and FZD7 regions lie at residues 1434-1439 (LKTLMA), 1487-1512 (SELSDVVLIIKVYMDNSKPPFGYYSN), and 1598-1600 (SLK). Cell wall-binding repeat units follow at residues 1833-1852 (VSGLVYINDSLYYFKPPIKN), 1854-1873 (ITGFTTIGDDKYYFNPDNGG), 1876-1895 (SVGETIIDGKNYYFSQNGVL), 1926-1945 (FTGKLIIDENVYYFGDNYRA), 1946-1965 (AIEWQTLDDEVYYFSTDTGR), 1967-1986 (FKGLNQIGDDKFYFNSDGIM), 1987-2006 (QKGFVNINDKTFYFDDSGVM), 2007-2026 (KSGYTEIDGRYFYFAENGEM), 2057-2076 (YSGILNFNNKIYYFDDSFTA), 2077-2097 (VVGWKDLEDGSKYYFDENTAE), 2099-2118 (SIGISIINDGKYYFNDSGIM), 2119-2138 (QIGFVTINNEVFYFSDSGIV), 2139-2158 (ESGMQNIDDNYFYISENGLV), 2209-2231 (ETGWIYDSENESDKYYFDPEAKK), 2233-2252 (YKGINVIDDIKYYFDENGIM), 2253-2272 (RTGLITFEDNHYYFNEDGEM), 2273-2292 (QYGYLNIEDKMFYFSEDGIM), 2323-2342 (YTGWLDLDEKRYYFTDEYIA), and 2343-2362 (ATGSVIIDGEEYYFDPDTAQ). Positions 1835–2367 (GLVYINDSLY…PDTAQLVISE (533 aa)) are receptor-binding (CROPS) region.

This sequence belongs to the clostridial glucosylating toxin (LCGT) family. In terms of assembly, interacts with host FZD1. Interacts with host FZD2; interaction promotes toxin entry into host cell and occupies the binding site for Wnt-adducted palmitoleate in FZD2, leading to prevent Wnt-binding and downstream Wnt signaling. Interacts with host FZD7. Interacts with host CSPG4. Interacts with host NECTIN3/PVRL3. Zn(2+) is required as a cofactor. It depends on Mn(2+) as a cofactor. The cofactor is Mg(2+). Post-translationally, undergoes autocatalytic cleavage to release the N-terminal part (Glucosyltransferase TcdB), which constitutes the active part of the toxin, in the host cytosol. 1D-myo-inositol hexakisphosphate-binding (InsP6) activates the peptidase C80 domain and promotes autoprocessing.

Its subcellular location is the secreted. The protein localises to the host endosome membrane. It is found in the host cytoplasm. It localises to the host cytosol. The protein resides in the host cell membrane. The enzyme catalyses L-threonyl-[protein] + UDP-alpha-D-glucose = 3-O-(alpha-D-glucosyl)-L-threonyl-[protein] + UDP + H(+). Protease activity is activated upon binding to 1D-myo-inositol hexakisphosphate (InsP6), which induces conformational reorganization. Precursor of a cytotoxin that targets and disrupts the colonic epithelium, inducing the host inflammatory and innate immune responses and resulting in diarrhea and pseudomembranous colitis. TcdB constitutes the main toxin that mediates the pathology of C.difficile infection, an opportunistic pathogen that colonizes the colon when the normal gut microbiome is disrupted. Compared to TcdA, TcdB is more virulent and more important for inducing the host inflammatory and innate immune responses. This form constitutes the precursor of the toxin: it enters into host cells and mediates autoprocessing to release the active toxin (Glucosyltransferase TcdB) into the host cytosol. Targets colonic epithelia by binding to the frizzled receptors FZD1, FZD2 and FZD7, and enters host cells via clathrin-mediated endocytosis. Frizzled receptors constitute the major host receptors in the colonic epithelium, but other receptors, such as CSPG4 or NECTIN3/PVRL3, have been identified. Binding to carbohydrates and sulfated glycosaminoglycans on host cell surface also contribute to entry into cells. Once entered into host cells, acidification in the endosome promotes the membrane insertion of the translocation region and formation of a pore, leading to translocation of the GT44 and peptidase C80 domains across the endosomal membrane. This activates the peptidase C80 domain and autocatalytic processing, releasing the N-terminal part (Glucosyltransferase TcdB), which constitutes the active part of the toxin, in the cytosol. In terms of biological role, active form of the toxin, which is released into the host cytosol following autoprocessing and inactivates small GTPases. Acts by mediating monoglucosylation of small GTPases of the Rho family (Rac1, RhoA, RhoB, RhoC, RhoG and Cdc42) in host cells at the conserved threonine residue located in the switch I region ('Thr-37/35'), using UDP-alpha-D-glucose as the sugar donor. Monoglucosylation of host small GTPases completely prevents the recognition of the downstream effector, blocking the GTPases in their inactive form, leading to actin cytoskeleton disruption and cell death, resulting in the loss of colonic epithelial barrier function. This Clostridioides difficile (Peptoclostridium difficile) protein is Toxin B.